Reading from the N-terminus, the 122-residue chain is Basic phospholipase A2 PL-X (122 aa).

Cystine bridges form between Cys-26-Cys-115, Cys-28-Cys-44, Cys-43-Cys-95, Cys-49-Cys-122, Cys-50-Cys-88, Cys-57-Cys-81, and Cys-75-Cys-86. Ca(2+)-binding residues include Tyr-27, Gly-29, and Gly-31. His-47 is an active-site residue. Asp-48 is a Ca(2+) binding site. Residue Asp-89 is part of the active site.

The protein belongs to the phospholipase A2 family. Group II subfamily. D49 sub-subfamily. Ca(2+) is required as a cofactor. As to expression, expressed by the venom gland.

It localises to the secreted. The catalysed reaction is a 1,2-diacyl-sn-glycero-3-phosphocholine + H2O = a 1-acyl-sn-glycero-3-phosphocholine + a fatty acid + H(+). Functionally, PLA2 catalyzes the calcium-dependent hydrolysis of the 2-acyl groups in 3-sn-phosphoglycerides. The protein is Basic phospholipase A2 PL-X of Protobothrops flavoviridis (Habu).